A 406-amino-acid chain; its full sequence is Argininosuccinate synthase (406 aa).

Residues 11–19 (AYSGGLDTS) and Ala-38 each bind ATP. L-citrulline is bound by residues Tyr-91 and Ser-96. Residue Gly-121 coordinates ATP. 3 residues coordinate L-aspartate: Thr-123, Asn-127, and Asp-128. Asn-127 contacts L-citrulline. Arg-131, Ser-181, Ser-190, Glu-266, and Tyr-278 together coordinate L-citrulline.

This sequence belongs to the argininosuccinate synthase family. Type 1 subfamily. In terms of assembly, homotetramer.

It is found in the cytoplasm. The enzyme catalyses L-citrulline + L-aspartate + ATP = 2-(N(omega)-L-arginino)succinate + AMP + diphosphate + H(+). The protein operates within amino-acid biosynthesis; L-arginine biosynthesis; L-arginine from L-ornithine and carbamoyl phosphate: step 2/3. In Campylobacter jejuni subsp. jejuni serotype O:23/36 (strain 81-176), this protein is Argininosuccinate synthase.